The following is a 476-amino-acid chain: Alkaline phosphatase H (476 aa).

A signal peptide spans 1–26 (MTPGYPLALSLAVSMAVLGSALPAQA). Position 77 (Asp-77) interacts with Mg(2+). Asp-77 is a Zn(2+) binding site. Residue Ser-128 is the Phosphoserine intermediate of the active site. Ser-128 is subject to Phosphoserine. Mg(2+) contacts are provided by Asp-179 and Thr-181. Residue Ser-206 is modified to Phosphoserine. Position 346 (Gln-346) interacts with Mg(2+). Zn(2+) is bound by residues Asp-353, His-357, Asp-395, His-396, and His-438.

Belongs to the alkaline phosphatase family. Requires Mg(2+) as cofactor. It depends on Zn(2+) as a cofactor.

The protein resides in the secreted. Its subcellular location is the periplasm. It carries out the reaction a phosphate monoester + H2O = an alcohol + phosphate. Has only phosphomonoesterase activity. This Pseudomonas aeruginosa (strain UCBPP-PA14) protein is Alkaline phosphatase H (phoA).